A 173-amino-acid chain; its full sequence is Large ribosomal subunit protein bL9 (173 aa).

It belongs to the bacterial ribosomal protein bL9 family.

Its function is as follows. Binds to the 23S rRNA. The sequence is that of Large ribosomal subunit protein bL9 from Rickettsia bellii (strain OSU 85-389).